A 243-amino-acid chain; its full sequence is Carboxy-S-adenosyl-L-methionine synthase (243 aa).

Residues Y40, 65-67, 90-91, 118-119, N133, and R200 contribute to the S-adenosyl-L-methionine site; these read GCS, DN, and DI.

It belongs to the class I-like SAM-binding methyltransferase superfamily. Cx-SAM synthase family. As to quaternary structure, homodimer.

It catalyses the reaction prephenate + S-adenosyl-L-methionine = carboxy-S-adenosyl-L-methionine + 3-phenylpyruvate + H2O. Functionally, catalyzes the conversion of S-adenosyl-L-methionine (SAM) to carboxy-S-adenosyl-L-methionine (Cx-SAM). In Shewanella sp. (strain ANA-3), this protein is Carboxy-S-adenosyl-L-methionine synthase.